Here is an 816-residue protein sequence, read N- to C-terminus: Leucine--tRNA ligase (816 aa).

The 'HIGH' region motif lies at 40–51 (SYPSGSQLHAGH). The 'KMSKS' region motif lies at 576–580 (KMSKS). K579 lines the ATP pocket.

Belongs to the class-I aminoacyl-tRNA synthetase family.

The protein resides in the cytoplasm. It carries out the reaction tRNA(Leu) + L-leucine + ATP = L-leucyl-tRNA(Leu) + AMP + diphosphate. The chain is Leucine--tRNA ligase from Clostridium perfringens (strain 13 / Type A).